A 194-amino-acid polypeptide reads, in one-letter code: Histone H1.0 (194 aa).

Met1 is modified (N-acetylmethionine). Low complexity predominate over residues 1-11 (MTENSTSAPAA). Residues 1 to 29 (MTENSTSAPAAKPKRAKASKKSTDHPKYS) are disordered. N-acetylthreonine; partial; in Histone H1.0, N-terminally processed is present on Thr2. At Asn4 the chain carries Deamidated asparagine; partial. In terms of domain architecture, H15 spans 24-97 (DHPKYSDMIV…GASGSFRLAK (74 aa)). Arg42 is modified (citrulline). Residues 84 to 194 (TKGVGASGSF…SSAKRAGKKK (111 aa)) form a disordered region. An ADP-ribosylserine modification is found at Ser104. Basic residues predominate over residues 105–194 (VAFKKTKKEI…SSAKRAGKKK (90 aa)).

It belongs to the histone H1/H5 family. Phosphorylated on Ser-17 in RNA edited version. Post-translationally, ADP-ribosylated on Ser-104 in response to DNA damage.

It localises to the nucleus. Its subcellular location is the chromosome. Histones H1 are necessary for the condensation of nucleosome chains into higher-order structures. The histones H1.0 are found in cells that are in terminal stages of differentiation or that have low rates of cell division. In Homo sapiens (Human), this protein is Histone H1.0.